Here is a 282-residue protein sequence, read N- to C-terminus: Pseudokinase OPG198 (282 aa).

Residues Met1 and Lys30 each coordinate ATP. In terms of domain architecture, Protein kinase spans 1-282 (MESFKYCFDN…DRLRRLFIQD (282 aa)).

It belongs to the protein kinase superfamily. Ser/Thr protein kinase family. Poxviruses subfamily. As to quaternary structure, interacts with B1/VPK1. Interacts with host VRK1. Interacts with host VRK2.

The protein resides in the host nucleus. Its activity is regulated as follows. Both catalytically active kinases B1/VPK1 and host VRK2 repress B12 inhibitory activity in a B1/VPK1 deletion mutant strain. Its function is as follows. Pseudokinase that plays a role in viral DNA replication repression by activating the antiviral protein BANF1 and inhibiting the activity of host VRK1, a cellular modulator of BANF1. The sequence is that of Pseudokinase OPG198 (OPG198) from Cynomys gunnisoni (Gunnison's prairie dog).